Consider the following 247-residue polypeptide: Probable transcriptional regulatory protein Tola_2714 (247 aa).

Residues 1 to 21 (MAGHSKWANIKHRKAAQDAKR) are disordered.

The protein belongs to the TACO1 family.

The protein resides in the cytoplasm. This chain is Probable transcriptional regulatory protein Tola_2714, found in Tolumonas auensis (strain DSM 9187 / NBRC 110442 / TA 4).